A 557-amino-acid chain; its full sequence is Dicarboxylate transporter 1, chloroplastic (557 aa).

Residues 1–69 (MASLALSGSC…STLVKASSTV (69 aa)) constitute a chloroplast transit peptide. The next 12 helical transmembrane spans lie at 90–110 (AAIK…FVPV), 122–142 (LAIF…LGAV), 158–178 (FAAA…LAFF), 229–249 (AGGI…SNVG), 256–276 (LGSW…SMFL), 305–325 (AAIV…YLIY), 355–375 (IMAA…KLGV), 376–396 (DAVT…VVTW), 411–431 (WFAA…IEWF), 438–458 (FVGG…LLYF), 477–497 (AFLS…LVLA), and 531–551 (YGFL…GAWW).

This sequence belongs to the SLC13A/DASS transporter (TC 2.A.47) family. DIT1 subfamily. In terms of tissue distribution, expressed in roots, rosette and cauline leaves, stems, flowers and siliques.

The protein resides in the plastid. It is found in the chloroplast inner membrane. Its function is as follows. 2-oxoglutarate/malate translocator involved with DIT2-1 in primary ammonia assimilation and in the re-assimilation of ammonia generated by the photorespiratory pathway. Imports 2-oxoglutarate into plastids as precursor for ammonia assimilation. 2-oxoglutarate is converted to glutamate, the end product of ammonia assimilation, which is exported to the cytosol by DIT2-1. In Arabidopsis thaliana (Mouse-ear cress), this protein is Dicarboxylate transporter 1, chloroplastic (DIT1).